Consider the following 332-residue polypeptide: 2,3-diketo-L-gulonate reductase (332 aa).

Residue His44 is the Proton donor of the active site. NAD(+) is bound by residues 168–174 (ITMVDMS), 224–225 (WK), and 304–306 (GHE).

It belongs to the LDH2/MDH2 oxidoreductase family. DlgD subfamily. As to quaternary structure, homodimer.

It localises to the cytoplasm. The catalysed reaction is 3-dehydro-L-gulonate + NAD(+) = 2,3-dioxo-L-gulonate + NADH + H(+). It carries out the reaction 3-dehydro-L-gulonate + NADP(+) = 2,3-dioxo-L-gulonate + NADPH + H(+). Its function is as follows. Catalyzes the reduction of 2,3-diketo-L-gulonate in the presence of NADH, to form 3-keto-L-gulonate. This chain is 2,3-diketo-L-gulonate reductase, found in Klebsiella pneumoniae (strain 342).